The sequence spans 665 residues: Protein kinase domain-containing protein ppk2 (665 aa).

4 disordered regions span residues 42–63, 82–152, 187–217, and 286–343; these read PNDS…KKKF, GNST…LSRS, LNSQ…SSMN, and AESL…VGHP. Polar residues predominate over residues 82-104; it reads GNSTRSPPFHLQNQKSNGQSEVW. Composition is skewed to low complexity over residues 137–152 and 206–217; these read SLSR…LSRS and TNRLSSSTSSMN. Residues 294–316 show a composition bias toward polar residues; it reads SATTIQQGDVSSYPLSRSVSTPV. Serine 358 is modified (phosphoserine). The region spanning 388–637 is the Protein kinase domain; sequence YTDFTKICQQ…NMLLETSSFL (250 aa). ATP contacts are provided by residues 394–402 and lysine 417; that span reads ICQQDTVGT.

Its subcellular location is the cytoplasm. This is Protein kinase domain-containing protein ppk2 (ppk2) from Schizosaccharomyces pombe (strain 972 / ATCC 24843) (Fission yeast).